The following is a 361-amino-acid chain: ATP phosphoribosyltransferase regulatory subunit (361 aa).

It belongs to the class-II aminoacyl-tRNA synthetase family. HisZ subfamily. As to quaternary structure, heteromultimer composed of HisG and HisZ subunits.

Its subcellular location is the cytoplasm. The protein operates within amino-acid biosynthesis; L-histidine biosynthesis; L-histidine from 5-phospho-alpha-D-ribose 1-diphosphate: step 1/9. In terms of biological role, required for the first step of histidine biosynthesis. May allow the feedback regulation of ATP phosphoribosyltransferase activity by histidine. This Thermus thermophilus (strain ATCC 27634 / DSM 579 / HB8) protein is ATP phosphoribosyltransferase regulatory subunit.